We begin with the raw amino-acid sequence, 146 residues long: Hemoglobin subunit beta (146 aa).

The residue at position 1 (Val1) is an N-acetylvaline. A Globin domain is found at 2-146 (HLTAEEKSAV…VANALAHKYH (145 aa)). Thr12 carries the post-translational modification Phosphothreonine. The residue at position 44 (Ser44) is a Phosphoserine. The residue at position 59 (Lys59) is an N6-acetyllysine. His63 contributes to the heme b binding site. The residue at position 82 (Lys82) is an N6-acetyllysine. His92 serves as a coordination point for heme b. Cys93 carries the S-nitrosocysteine modification. Lys144 carries the N6-acetyllysine modification.

Belongs to the globin family. In terms of assembly, heterotetramer of two alpha chains and two beta chains. In terms of tissue distribution, red blood cells.

In terms of biological role, involved in oxygen transport from the lung to the various peripheral tissues. The polypeptide is Hemoglobin subunit beta (HBB) (Meles meles (Eurasian badger)).